A 533-amino-acid polypeptide reads, in one-letter code: Calcium-dependent protein kinase 19 (533 aa).

Polar residues-rich tracts occupy residues 1–12 and 24–38; these read MGSCCSRATSPD and SHQTKPAQTTPSYNH. Residues 1 to 53 are disordered; the sequence is MGSCCSRATSPDSGRGGANGYGYSHQTKPAQTTPSYNHPQPPPPAEVRYTPSA. The N-myristoyl glycine moiety is linked to residue Gly2. The Protein kinase domain maps to 85–343; the sequence is YSLGKELGRG…SAQVLQHPWL (259 aa). Residues 91–99 and Lys114 contribute to the ATP site; that span reads LGRGQFGVT. Catalysis depends on Asp209, which acts as the Proton acceptor. The tract at residues 348 to 378 is autoinhibitory domain; it reads ASDKPIDSAVLSRMKQFRAMNKLKKMALKVI. EF-hand domains lie at 385-420, 421-456, 457-492, and 497-527; these read EEIKGLKQMFTNMDTDNSGTITYEELKAGLAKLGSK, LSEAEVKQLMEAADVDGNGSIDYVEFITATMHRHKL, ERDEHLFKAFQYFDKDNSGFITRDELESALIEHEMG, and IKDIISEVDTDNDGRINYEEFCAMMRGGGMQ. The Ca(2+) site is built by Asp398, Asp400, Ser402, Thr404, Glu409, Asp434, Asp436, Asn438, Ser440, Glu445, Asp470, Asp472, Ser474, Glu481, Asp505, Asp507, Asp509, Arg511, and Glu516.

It belongs to the protein kinase superfamily. Ser/Thr protein kinase family. CDPK subfamily. Expressed in root tips, leaf veins, mesophyll cells, flower reproductive organs and mature pollen grains.

Its subcellular location is the membrane. It catalyses the reaction L-seryl-[protein] + ATP = O-phospho-L-seryl-[protein] + ADP + H(+). The catalysed reaction is L-threonyl-[protein] + ATP = O-phospho-L-threonyl-[protein] + ADP + H(+). Its activity is regulated as follows. Activated by calcium. Autophosphorylation may play an important role in the regulation of the kinase activity. In terms of biological role, may play a role in signal transduction pathways that involve calcium as a second messenger. This Oryza sativa subsp. japonica (Rice) protein is Calcium-dependent protein kinase 19.